Reading from the N-terminus, the 957-residue chain is Glycine dehydrogenase (decarboxylating) (957 aa).

Lysine 708 carries the N6-(pyridoxal phosphate)lysine modification.

The protein belongs to the GcvP family. As to quaternary structure, the glycine cleavage system is composed of four proteins: P, T, L and H. It depends on pyridoxal 5'-phosphate as a cofactor.

It catalyses the reaction N(6)-[(R)-lipoyl]-L-lysyl-[glycine-cleavage complex H protein] + glycine + H(+) = N(6)-[(R)-S(8)-aminomethyldihydrolipoyl]-L-lysyl-[glycine-cleavage complex H protein] + CO2. The glycine cleavage system catalyzes the degradation of glycine. The P protein binds the alpha-amino group of glycine through its pyridoxal phosphate cofactor; CO(2) is released and the remaining methylamine moiety is then transferred to the lipoamide cofactor of the H protein. This is Glycine dehydrogenase (decarboxylating) from Salmonella arizonae (strain ATCC BAA-731 / CDC346-86 / RSK2980).